The following is a 192-amino-acid chain: 7-methyl-GTP pyrophosphatase (192 aa).

The active-site Proton acceptor is the Asp-70.

The protein belongs to the Maf family. YceF subfamily. It depends on a divalent metal cation as a cofactor.

It is found in the cytoplasm. It catalyses the reaction N(7)-methyl-GTP + H2O = N(7)-methyl-GMP + diphosphate + H(+). Its function is as follows. Nucleoside triphosphate pyrophosphatase that hydrolyzes 7-methyl-GTP (m(7)GTP). May have a dual role in cell division arrest and in preventing the incorporation of modified nucleotides into cellular nucleic acids. This Xanthomonas campestris pv. campestris (strain 8004) protein is 7-methyl-GTP pyrophosphatase.